The primary structure comprises 903 residues: Dynamin-like GTPase msp1, mitochondrial (903 aa).

The N-terminal 78 residues, M1–R78, are a transit peptide targeting the mitochondrion. A helical membrane pass occupies residues L86 to A103. Residues V167 to D188 show a composition bias toward basic and acidic residues. The interval V167–V198 is disordered. The helical transmembrane segment at V198 to V214 threads the bilayer. The 272-residue stretch at A260–Q531 folds into the Dynamin-type G domain. Positions G270–S277 are G1 motif. S273, S274, G275, K276, S277, S278, and G292 together coordinate GTP. S277 contacts Mg(2+). Residues V296–R298 form a G2 motif region. 2 residues coordinate Mg(2+): T297 and D370. Residues D370–G373 are G3 motif. The G4 motif stretch occupies residues T438–D441. Residues K439, D441, and S468 each contribute to the GTP site. The segment at I467–I470 is G5 motif. Residues A691–K805 are paddle region. C802 and C811 are disulfide-bonded. One can recognise a GED domain in the interval K805–Q898.

Belongs to the TRAFAC class dynamin-like GTPase superfamily. Dynamin/Fzo/YdjA family. As to quaternary structure, homooligomer. Interacts with cdr1. Cleavage of the transit peptide by mitochondrial processing protease (MPP) produces a long integral membrane form of msp1 (l-msp1). Further processing by a rhomboid protease after the transmembrane regions produces a short peripheral membrane form of msp1 (s-msp1). Both isoforms are required for full activity.

Its subcellular location is the mitochondrion inner membrane. It is found in the mitochondrion intermembrane space. It catalyses the reaction GTP + H2O = GDP + phosphate + H(+). Its function is as follows. Dynamin-related GTPase that is essential for normal mitochondrial morphology by mediating fusion of the mitochondrial inner membranes and maintaining respiratory chain function. Exists in two forms: the transmembrane, long form (Dynamin-like GTPase msp1, long form; l-msp1), which is tethered to the inner mitochondrial membrane, and the short soluble form (Dynamin-like GTPase msp1, short form; s-msp1), which results from proteolytic cleavage and localizes in the intermembrane space. Both forms (l-msp1 and s-msp1) cooperate to catalyze the fusion of the mitochondrial inner membrane. Its role in mitochondrial morphology is required for mitochondrial genome maintenance. Constitutes the transmembrane long form (l-msp1) that plays a central role in mitochondrial inner membrane fusion. L-msp1 and the soluble short form (s-msp1) form higher-order helical assemblies that coordinate the fusion of mitochondrial inner membranes. Inner membrane-anchored l-msp1 molecules initiate membrane remodeling by recruiting soluble s-msp1 to rapidly polymerize into a flexible cylindrical scaffold encaging the mitochondrial inner membrane. Once at the membrane surface, the formation of s-msp1 helices induce bilayer curvature. Msp1 dimerization through the paddle region, which inserts into cardiolipin-containing membrane, promotes GTP hydrolysis and the helical assembly of a flexible msp1 lattice on the membrane, which drives membrane curvature and mitochondrial fusion. In terms of biological role, constitutes the soluble short form (s-msp1) generated by cleavage, which plays a central role in mitochondrial inner membrane fusion. The transmembrane long form (l-msp1) and the s-msp1 form higher-order helical assemblies that coordinate the fusion of mitochondrial inner membranes. Inner membrane-anchored l-msp1 molecules initiate membrane remodeling by recruiting soluble s-msp1 to rapidly polymerize into a flexible cylindrical scaffold encaging the mitochondrial inner membrane. Once at the membrane surface, the formation of s-msp1 helices induce bilayer curvature. Msp1 dimerization through the paddle region, which inserts into cardiolipin-containing membrane, promotes GTP hydrolysis and the helical assembly of a flexible msp1 lattice on the membrane, which drives membrane curvature and mitochondrial fusion. This Schizosaccharomyces pombe (strain 972 / ATCC 24843) (Fission yeast) protein is Dynamin-like GTPase msp1, mitochondrial.